Here is a 198-residue protein sequence, read N- to C-terminus: DNA damage response protein D (198 aa).

A disordered region spans residues 124-198; it reads SAAPTDPAGP…SEAGENTPAA (75 aa). The span at 136 to 180 shows a compositional bias: basic and acidic residues; it reads PGTDRAERTAAERTASERATHDRASTERPARPRRSAEPEAVRTED.

Its function is as follows. Appears to contribute to D.radiodurans capacity to survive exposure to ionizing radiation. May play a role in DNA repair and genome reconstitution. This is DNA damage response protein D (ddrD) from Deinococcus radiodurans (strain ATCC 13939 / DSM 20539 / JCM 16871 / CCUG 27074 / LMG 4051 / NBRC 15346 / NCIMB 9279 / VKM B-1422 / R1).